Here is a 359-residue protein sequence, read N- to C-terminus: 4-hydroxy-3-methylbut-2-en-1-yl diphosphate synthase (flavodoxin) (359 aa).

Residues Cys264, Cys267, Cys299, and Glu306 each coordinate [4Fe-4S] cluster.

It belongs to the IspG family. It depends on [4Fe-4S] cluster as a cofactor.

It catalyses the reaction (2E)-4-hydroxy-3-methylbut-2-enyl diphosphate + oxidized [flavodoxin] + H2O + 2 H(+) = 2-C-methyl-D-erythritol 2,4-cyclic diphosphate + reduced [flavodoxin]. The protein operates within isoprenoid biosynthesis; isopentenyl diphosphate biosynthesis via DXP pathway; isopentenyl diphosphate from 1-deoxy-D-xylulose 5-phosphate: step 5/6. Converts 2C-methyl-D-erythritol 2,4-cyclodiphosphate (ME-2,4cPP) into 1-hydroxy-2-methyl-2-(E)-butenyl 4-diphosphate. This is 4-hydroxy-3-methylbut-2-en-1-yl diphosphate synthase (flavodoxin) from Helicobacter pylori (strain Shi470).